Here is a 787-residue protein sequence, read N- to C-terminus: MKQPTLIRPRLRHRRSTPAAATKMCPKRHWLVNNRAAGSRGSGGAAARSRRSLDQIVEVLVALIVVNCLATAAAALITPPDSLESLGSLGIPSSSASSSEDDDDMSSGFYRIPHRLEGYPQLQQLQRGQNFKISPKPCSFGRVEGTCMFVWECIKSEGKHVGMCVDSFMFGSCCTHNYTDNIVLPQTAFSYTRPTKPLTLRPRPPAAPYKPMISGMTTIERPHGAGTLVIRPSGPHHQGTLARPHPPPYQSKPTTASDLHGSASHPSSSSSSSSSSNPNSIWHTSTQQQQQQQHQQNQQNHWQMTTEPSFITKPRPTGWTKPGIVNLPMPARPSKPSKPTKKPIVYDRTPPPPPSVPPSTSTSTTSTSLIWPAQTHPPQPHRPTRPQLSPGTSLAASSSSHWPSSTTSTTSSTTSTTTTTTTTRRTTTPTTTTRRTTTNKPTRPYQRPTTATSSSSTSTTSSKTPTTTRPISSSSSSSSGIVTSSQRPTQPTHRTPVLATSGIETNEISDSSIPDAGALGHVKTISAARSECGVPTLARPETRIVGGKSAAFGRWPWQVSVRRTSFFGFSSTHRCGGALINENWIATAGHCVDDLLISQIRIRVGEYDFSHVQEQLPYIERGVAKKVVHPKYSFLTYEYDLALVKLEQPLEFAPHVSPICLPETDSLLIGMNATVTGWGRLSEGGTLPSVLQEVSVPIVSNDNCKSMFMRAGRQEFIPDIFLCAGYETGGQDSCQGDSGGPLQAKSQDGRFFLAGIISWGIGCAEANLPGVCTRISKFTPWILEHVR.

The disordered stretch occupies residues 1-22; it reads MKQPTLIRPRLRHRRSTPAAAT. At 1–58 the chain is on the cytoplasmic side; it reads MKQPTLIRPRLRHRRSTPAAATKMCPKRHWLVNNRAAGSRGSGGAAARSRRSLDQIVE. Residues 59 to 80 form a helical; Signal-anchor for type II membrane protein membrane-spanning segment; that stretch reads VLVALIVVNCLATAAAALITPP. Residues 81-787 are Extracellular-facing; that stretch reads DSLESLGSLG…FTPWILEHVR (707 aa). N-linked (GlcNAc...) asparagine glycosylation occurs at asparagine 177. The segment at 225-516 is disordered; it reads AGTLVIRPSG…EISDSSIPDA (292 aa). 5 stretches are compositionally biased toward low complexity: residues 262-280, 287-303, 358-368, 393-438, and 449-485; these read SASH…NPNS, QQQQ…NHWQ, PSTSTSTTSTS, SLAA…RTTT, and TTAT…VTSS. Residues 502–512 are compositionally biased toward polar residues; that stretch reads GIETNEISDSS. 2 disulfide bridges follow: cysteine 532-cysteine 660 and cysteine 575-cysteine 591. The 244-residue stretch at 544–787 folds into the Peptidase S1 domain; that stretch reads IVGGKSAAFG…FTPWILEHVR (244 aa). Active-site charge relay system residues include histidine 590 and aspartate 640. N-linked (GlcNAc...) asparagine glycosylation is present at asparagine 672. 2 disulfide bridges follow: cysteine 704/cysteine 723 and cysteine 734/cysteine 763. Residue serine 738 is the Charge relay system of the active site.

The protein belongs to the peptidase S1 family. Post-translationally, may activate itself by proteolytic cleavage.

The protein localises to the membrane. Hormone dependent protease required for epithelial morphogenesis, including the formation of bristles, legs, and wings. Has a dual function, detaches imaginal disk cells from extracellular matrices through its extracellular proteolytic domain and transmits an outside-to-inside signal to its intracellular domain to modify the cytoskeleton during morphogenesis. In Drosophila melanogaster (Fruit fly), this protein is Serine proteinase stubble (Sb).